The chain runs to 228 residues: DNA repair protein RecO (228 aa).

It belongs to the RecO family.

Its function is as follows. Involved in DNA repair and RecF pathway recombination. In Mannheimia succiniciproducens (strain KCTC 0769BP / MBEL55E), this protein is DNA repair protein RecO.